A 301-amino-acid chain; its full sequence is uncharacterized protein (301 aa).

Positions 27 to 85 constitute an FHA domain; sequence YKIGRHTNKSTSPSPSNLFFNSKVLSRQHAELWLDKDTLSVYIRDVKSSNGTFVNETRL. The interval 187-236 is disordered; sequence TGKTRDNRNNHHYSRKSSPHISSLAVPSTKHLDGERDRNLKRSTSPLSSS. Phosphoserine is present on S204. A compositionally biased stretch (basic and acidic residues) spans 216 to 226; it reads KHLDGERDRNL. S231 is subject to Phosphoserine.

Interacts with sad1.

It is found in the nucleus. This is an uncharacterized protein from Schizosaccharomyces pombe (strain 972 / ATCC 24843) (Fission yeast).